The following is a 201-amino-acid chain: Ribosome maturation factor RimM (201 aa).

Residues 92-166 (DEDEFYHADL…RVVVEPPANF (75 aa)) form the PRC barrel domain. The tract at residues 169–201 (PAGPQPAEGEEMPDGALEALEGEEAGAGTAPQP) is disordered.

The protein belongs to the RimM family. Binds ribosomal protein uS19.

The protein localises to the cytoplasm. An accessory protein needed during the final step in the assembly of 30S ribosomal subunit, possibly for assembly of the head region. Essential for efficient processing of 16S rRNA. May be needed both before and after RbfA during the maturation of 16S rRNA. It has affinity for free ribosomal 30S subunits but not for 70S ribosomes. This chain is Ribosome maturation factor RimM, found in Rhodospirillum centenum (strain ATCC 51521 / SW).